Here is a 776-residue protein sequence, read N- to C-terminus: Structure-specific endonuclease subunit SLX4 (776 aa).

The span at 201–217 (EEQMVSDDNSSTEDDTD) shows a compositional bias: acidic residues. Disordered regions lie at residues 201-223 (EEQM…QNDG), 263-283 (KSLQ…PDQN), and 507-531 (PPLD…KPHS).

Belongs to the SLX4 family. As to quaternary structure, forms a heterodimer with SLX1. Post-translationally, phosphorylated in response to DNA damage.

Its subcellular location is the nucleus. Its function is as follows. Regulatory subunit of the SLX1-SLX4 structure-specific endonuclease that resolves DNA secondary structures generated during DNA repair and recombination. Has endonuclease activity towards branched DNA substrates, introducing single-strand cuts in duplex DNA close to junctions with ss-DNA. The chain is Structure-specific endonuclease subunit SLX4 from Candida albicans (strain SC5314 / ATCC MYA-2876) (Yeast).